Consider the following 231-residue polypeptide: 2-C-methyl-D-erythritol 4-phosphate cytidylyltransferase (231 aa).

The protein belongs to the IspD/TarI cytidylyltransferase family. IspD subfamily.

It catalyses the reaction 2-C-methyl-D-erythritol 4-phosphate + CTP + H(+) = 4-CDP-2-C-methyl-D-erythritol + diphosphate. It participates in isoprenoid biosynthesis; isopentenyl diphosphate biosynthesis via DXP pathway; isopentenyl diphosphate from 1-deoxy-D-xylulose 5-phosphate: step 2/6. In terms of biological role, catalyzes the formation of 4-diphosphocytidyl-2-C-methyl-D-erythritol from CTP and 2-C-methyl-D-erythritol 4-phosphate (MEP). This is 2-C-methyl-D-erythritol 4-phosphate cytidylyltransferase from Lysinibacillus sphaericus (strain C3-41).